The chain runs to 207 residues: Small ribosomal subunit protein uS4 (207 aa).

Residues 33 to 54 (KLDSKPGQHGRTSGARTSDYGN) form a disordered region. The span at 42–53 (GRTSGARTSDYG) shows a compositional bias: polar residues. The S4 RNA-binding domain occupies 97-160 (SRLDNVVYRM…KKQVRIAEAL (64 aa)).

The protein belongs to the universal ribosomal protein uS4 family. In terms of assembly, part of the 30S ribosomal subunit. Contacts protein S5. The interaction surface between S4 and S5 is involved in control of translational fidelity.

In terms of biological role, one of the primary rRNA binding proteins, it binds directly to 16S rRNA where it nucleates assembly of the body of the 30S subunit. With S5 and S12 plays an important role in translational accuracy. This Cupriavidus necator (strain ATCC 17699 / DSM 428 / KCTC 22496 / NCIMB 10442 / H16 / Stanier 337) (Ralstonia eutropha) protein is Small ribosomal subunit protein uS4.